The sequence spans 604 residues: NADP-dependent malic enzyme, mitochondrial (604 aa).

Positions A29 to G50 are disordered. The Proton donor role is filled by Y137. An NAD(+)-binding site is contributed by R190. K208 (proton acceptor) is an active-site residue. Residues E280, D281, and D304 each coordinate a divalent metal cation. D304 contacts NAD(+). S371 bears the Phosphoserine mark. Position 443 (N443) interacts with NAD(+).

It belongs to the malic enzymes family. Requires Mg(2+) as cofactor. Mn(2+) serves as cofactor. As to expression, expressed predominantly in organs with a low-division rate.

The protein resides in the mitochondrion matrix. The catalysed reaction is (S)-malate + NADP(+) = pyruvate + CO2 + NADPH. It carries out the reaction oxaloacetate + H(+) = pyruvate + CO2. In terms of biological role, catalyzes the oxidative decarboxylation of (S)-malate to pyruvate using NADP(+) as a cofactor. Can also reverse the decarboxylation reaction, but only with significantly lower efficiency. The chain is NADP-dependent malic enzyme, mitochondrial from Homo sapiens (Human).